The primary structure comprises 427 residues: Dihydroorotase (427 aa).

2 residues coordinate Zn(2+): H57 and H59. Residues H59 to R61 and N91 contribute to the substrate site. The Zn(2+) site is built by D149, H176, and H229. N275 lines the substrate pocket. A Zn(2+)-binding site is contributed by D302. The active site involves D302. Substrate contacts are provided by residues H306 and F320–G321.

Belongs to the metallo-dependent hydrolases superfamily. DHOase family. Class I DHOase subfamily. It depends on Zn(2+) as a cofactor.

The catalysed reaction is (S)-dihydroorotate + H2O = N-carbamoyl-L-aspartate + H(+). The protein operates within pyrimidine metabolism; UMP biosynthesis via de novo pathway; (S)-dihydroorotate from bicarbonate: step 3/3. Catalyzes the reversible cyclization of carbamoyl aspartate to dihydroorotate. This Shouchella clausii (strain KSM-K16) (Alkalihalobacillus clausii) protein is Dihydroorotase.